We begin with the raw amino-acid sequence, 380 residues long: Putative heat stress transcription factor B-4a (380 aa).

The tract at residues 216–245 is hydrophobic repeat HR-A/B; the sequence is LLRGNAALVQELAHMRKLYSDIIYFVQNHV. 2 disordered regions span residues 268–296 and 314–380; these read PAGG…TVAE and INEV…VSPP. A compositionally biased stretch (low complexity) spans 278 to 296; sequence VRGASGRSATSSSSLTVAE. The short motif at 346–348 is the Nuclear localization signal element; it reads RKR.

Belongs to the HSF family. Class B subfamily. Homotrimer. Post-translationally, exhibits temperature-dependent phosphorylation.

Its subcellular location is the nucleus. In terms of biological role, transcriptional regulator that specifically binds DNA of heat shock promoter elements (HSE). The polypeptide is Putative heat stress transcription factor B-4a (HSFB4A) (Oryza sativa subsp. japonica (Rice)).